The following is a 629-amino-acid chain: tRNA uridine 5-carboxymethylaminomethyl modification enzyme MnmG (629 aa).

Residues 14–19, Val126, and Ser181 contribute to the FAD site; that span reads GAGHAG. 273–287 provides a ligand contact to NAD(+); it reads GPRYCPSIEDKVVRF. Gln370 is an FAD binding site.

It belongs to the MnmG family. In terms of assembly, homodimer. Heterotetramer of two MnmE and two MnmG subunits. It depends on FAD as a cofactor.

Its subcellular location is the cytoplasm. Its function is as follows. NAD-binding protein involved in the addition of a carboxymethylaminomethyl (cmnm) group at the wobble position (U34) of certain tRNAs, forming tRNA-cmnm(5)s(2)U34. The polypeptide is tRNA uridine 5-carboxymethylaminomethyl modification enzyme MnmG (Geobacillus kaustophilus (strain HTA426)).